A 266-amino-acid chain; its full sequence is Urease accessory protein UreD (266 aa).

This sequence belongs to the UreD family. UreD, UreF and UreG form a complex that acts as a GTP-hydrolysis-dependent molecular chaperone, activating the urease apoprotein by helping to assemble the nickel containing metallocenter of UreC. The UreE protein probably delivers the nickel.

The protein localises to the cytoplasm. Required for maturation of urease via the functional incorporation of the urease nickel metallocenter. This is Urease accessory protein UreD from Jannaschia sp. (strain CCS1).